Here is a 284-residue protein sequence, read N- to C-terminus: 2-dehydro-3-deoxyphosphooctonate aldolase (284 aa).

Belongs to the KdsA family.

The protein localises to the cytoplasm. The catalysed reaction is D-arabinose 5-phosphate + phosphoenolpyruvate + H2O = 3-deoxy-alpha-D-manno-2-octulosonate-8-phosphate + phosphate. It participates in carbohydrate biosynthesis; 3-deoxy-D-manno-octulosonate biosynthesis; 3-deoxy-D-manno-octulosonate from D-ribulose 5-phosphate: step 2/3. Its pathway is bacterial outer membrane biogenesis; lipopolysaccharide biosynthesis. This chain is 2-dehydro-3-deoxyphosphooctonate aldolase, found in Salmonella enteritidis PT4 (strain P125109).